The chain runs to 268 residues: Purine nucleoside phosphorylase (268 aa).

Phosphate-binding positions include serine 36, histidine 68, 88 to 90, and alanine 120; that span reads RIH. An a purine D-ribonucleoside-binding site is contributed by glutamate 189. Serine 208 is a binding site for phosphate. Asparagine 231 contacts a purine D-ribonucleoside.

Belongs to the PNP/MTAP phosphorylase family. As to quaternary structure, homotrimer.

It carries out the reaction a purine 2'-deoxy-D-ribonucleoside + phosphate = a purine nucleobase + 2-deoxy-alpha-D-ribose 1-phosphate. It participates in purine metabolism; purine nucleoside salvage. Its function is as follows. The purine nucleoside phosphorylases catalyze the phosphorolytic breakdown of the N-glycosidic bond in the beta-(deoxy)ribonucleoside molecules, with the formation of the corresponding free purine bases and pentose-1-phosphate. Cleaves guanosine, inosine, 2'-deoxyguanosine and 2'-deoxyinosine. The sequence is that of Purine nucleoside phosphorylase (punA) from Mycobacterium leprae (strain TN).